A 141-amino-acid polypeptide reads, in one-letter code: Hemoglobin subunit alpha (141 aa).

In terms of domain architecture, Globin spans 1 to 141 (VLSATDKANV…VATVLTSKYR (141 aa)). Residue S3 is modified to Phosphoserine. N6-succinyllysine occurs at positions 7 and 11. K16 is subject to N6-acetyllysine; alternate. An N6-succinyllysine; alternate modification is found at K16. The residue at position 24 (Y24) is a Phosphotyrosine. K40 is modified (N6-succinyllysine). H58 is an O2 binding site. Residue H87 participates in heme b binding. The residue at position 102 (S102) is a Phosphoserine. The residue at position 108 (T108) is a Phosphothreonine. Position 124 is a phosphoserine (S124). A phosphothreonine mark is found at T134 and T137. At S138 the chain carries Phosphoserine.

It belongs to the globin family. As to quaternary structure, heterotetramer of two alpha chains and two beta chains. As to expression, red blood cells.

Functionally, involved in oxygen transport from the lung to the various peripheral tissues. In terms of biological role, hemopressin acts as an antagonist peptide of the cannabinoid receptor CNR1. Hemopressin-binding efficiently blocks cannabinoid receptor CNR1 and subsequent signaling. In Erinaceus europaeus (Western European hedgehog), this protein is Hemoglobin subunit alpha (HBA).